A 369-amino-acid chain; its full sequence is Protein pxr-1 (369 aa).

The segment at 1–23 (MGLAAAKNKRKLGTDPNNTKWSR) is disordered. The G-patch domain occupies 25–79 (ETTFGQKILRAQGWQPGEFLGAKDAAHAVHHTEASSSHIKVTLKDDNLGLGAKRN). Positions 147-338 (EEDGVPQSDT…GTSTPTVTSS (192 aa)) are disordered. Positions 153–167 (QSDTVDQQVETVPSQ) are enriched in polar residues. Basic residues predominate over residues 218-227 (SKKKEKKDKK). The segment covering 228–237 (EKKDQKEKKD) has biased composition (basic and acidic residues). The segment covering 267-292 (KSKKDKKKEKKEKKDKKKDKKEKKRK) has biased composition (basic residues). A compositionally biased stretch (basic and acidic residues) spans 304–318 (EDSKSKAQKRTKDGA). Low complexity predominate over residues 322–338 (TSTPGGSGTSTPTVTSS).

Belongs to the PINX1 family.

It is found in the nucleus. It localises to the nucleolus. Involved in rRNA-processing at A0, A1 and A2 sites and negatively regulates telomerase. This chain is Protein pxr-1 (pxr-1), found in Neurospora crassa (strain ATCC 24698 / 74-OR23-1A / CBS 708.71 / DSM 1257 / FGSC 987).